The following is a 395-amino-acid chain: General transcription factor IIH subunit 2 (395 aa).

The 177-residue stretch at 60–236 (HLYVVVDGSR…HYKELLTHHV (177 aa)) folds into the VWFA domain. Phosphotyrosine is present on Y95. The segment at 291 to 308 (CPQCRAKYCELPVECKIC) adopts a C4-type zinc-finger fold.

The protein belongs to the GTF2H2 family. As to quaternary structure, component of the TFIID-containing RNA polymerase II pre-initiation complex that is composed of TBP and at least GTF2A1, GTF2A2, GTF2E1, GTF2E2, GTF2F1, GTF2H2, GTF2H3, GTF2H4, GTF2H5, GTF2B, TCEA1, ERCC2 and ERCC3. Component of the 7-subunit TFIIH core complex composed of XPB/ERCC3, XPD/ERCC2, GTF2H1, GTF2H2, GTF2H3, GTF2H4 and GTF2H5, which is active in NER. The core complex associates with the 3-subunit CDK-activating kinase (CAK) module composed of CCNH/cyclin H, CDK7 and MNAT1 to form the 10-subunit holoenzyme (holo-TFIIH) active in transcription. Interacts with XPB, XPD, GTF2H1 and GTF2H3.

The protein resides in the nucleus. Its function is as follows. Component of the general transcription and DNA repair factor IIH (TFIIH) core complex, which is involved in general and transcription-coupled nucleotide excision repair (NER) of damaged DNA and, when complexed to CAK, in RNA transcription by RNA polymerase II. In NER, TFIIH acts by opening DNA around the lesion to allow the excision of the damaged oligonucleotide and its replacement by a new DNA fragment. In transcription, TFIIH has an essential role in transcription initiation. When the pre-initiation complex (PIC) has been established, TFIIH is required for promoter opening and promoter escape. Phosphorylation of the C-terminal tail (CTD) of the largest subunit of RNA polymerase II by the kinase module CAK controls the initiation of transcription. The N-terminus of GTF2H2 interacts with and regulates XPD whereas an intact C-terminus is required for a successful escape of RNAP II form the promoter. This Bos taurus (Bovine) protein is General transcription factor IIH subunit 2 (GTF2H2).